The chain runs to 143 residues: Hemoglobin subunit alpha (143 aa).

S1 is subject to N-acetylserine. Residues 1-143 (SLSATDKARV…LALALSEKYR (143 aa)) form the Globin domain. H60 is a binding site for O2. Residue H89 participates in heme b binding.

The protein belongs to the globin family. As to quaternary structure, heterotetramer of two alpha chains and two beta chains. As to expression, red blood cells.

In terms of biological role, involved in oxygen transport from gills to the various peripheral tissues. In Leiostomus xanthurus (Spot), this protein is Hemoglobin subunit alpha (hba).